The sequence spans 1560 residues: uncharacterized protein (1560 aa).

A disordered region spans residues 1-46 (MEEIENAHYQNLENFNDETSEDVNDTSDDINKNNDDNNKYDDNNVN). Over residues 15-28 (FNDETSEDVNDTSD) the composition is skewed to acidic residues. Residues 29 to 46 (DINKNNDDNNKYDDNNVN) are compositionally biased toward basic and acidic residues. Coiled coils occupy residues 36–60 (DNNK…EEDN) and 317–359 (KKNN…NNNN). Residues 568–594 (KKKKKKNDHHERDSDNNNNDSNNNNYY) are disordered. Residues 583-594 (NNNNDSNNNNYY) are compositionally biased toward low complexity. A coiled-coil region spans residues 1188–1239 (DTTNNILNKQNESLDNLKKNMYLSKNNYDNQLSSYKNTKQNKTNINEKYNNN). 2 helical membrane-spanning segments follow: residues 1271–1291 (LYIS…FILL) and 1314–1334 (LDYF…ILIS).

The protein resides in the membrane. This is an uncharacterized protein from Plasmodium falciparum (isolate 3D7).